A 328-amino-acid polypeptide reads, in one-letter code: Biotin synthase (328 aa).

One can recognise a Radical SAM core domain in the interval 42-267 (YHVQLASLLS…LMPGSRVRLS (226 aa)). [4Fe-4S] cluster is bound by residues C57, C61, and C64. 4 residues coordinate [2Fe-2S] cluster: C101, C133, C193, and R265.

It belongs to the radical SAM superfamily. Biotin synthase family. In terms of assembly, homodimer. Requires [4Fe-4S] cluster as cofactor. [2Fe-2S] cluster serves as cofactor.

It catalyses the reaction (4R,5S)-dethiobiotin + (sulfur carrier)-SH + 2 reduced [2Fe-2S]-[ferredoxin] + 2 S-adenosyl-L-methionine = (sulfur carrier)-H + biotin + 2 5'-deoxyadenosine + 2 L-methionine + 2 oxidized [2Fe-2S]-[ferredoxin]. It participates in cofactor biosynthesis; biotin biosynthesis; biotin from 7,8-diaminononanoate: step 2/2. In terms of biological role, catalyzes the conversion of dethiobiotin (DTB) to biotin by the insertion of a sulfur atom into dethiobiotin via a radical-based mechanism. The chain is Biotin synthase from Synechococcus sp. (strain CC9311).